The primary structure comprises 441 residues: ATP-dependent protease ATPase subunit HslU (441 aa).

ATP is bound by residues valine 18, 60–65, aspartate 254, glutamate 319, and arginine 391; that span reads GVGKTE.

Belongs to the ClpX chaperone family. HslU subfamily. As to quaternary structure, a double ring-shaped homohexamer of HslV is capped on each side by a ring-shaped HslU homohexamer. The assembly of the HslU/HslV complex is dependent on binding of ATP.

The protein localises to the cytoplasm. In terms of biological role, ATPase subunit of a proteasome-like degradation complex; this subunit has chaperone activity. The binding of ATP and its subsequent hydrolysis by HslU are essential for unfolding of protein substrates subsequently hydrolyzed by HslV. HslU recognizes the N-terminal part of its protein substrates and unfolds these before they are guided to HslV for hydrolysis. This is ATP-dependent protease ATPase subunit HslU from Verminephrobacter eiseniae (strain EF01-2).